The primary structure comprises 555 residues: CTP synthase (555 aa).

Residues 1-265 (MTRYIFITGG…GNRVCEKLNI (265 aa)) are amidoligase domain. Ser13 lines the CTP pocket. Position 13 (Ser13) interacts with UTP. Residues 14-19 (SLGKGI) and Asp71 each bind ATP. Mg(2+)-binding residues include Asp71 and Glu139. Residues 146 to 148 (DIE), 186 to 191 (KTKPTQ), and Lys222 each bind CTP. Residues 186–191 (KTKPTQ) and Lys222 each bind UTP. A Glutamine amidotransferase type-1 domain is found at 290–541 (TVAVVGKYVD…IKAGLAAKEA (252 aa)). Gly351 contacts L-glutamine. Cys378 serves as the catalytic Nucleophile; for glutamine hydrolysis. L-glutamine contacts are provided by residues 379–382 (LGMQ), Glu402, and Arg469. Catalysis depends on residues His514 and Glu516.

This sequence belongs to the CTP synthase family. In terms of assembly, homotetramer.

The catalysed reaction is UTP + L-glutamine + ATP + H2O = CTP + L-glutamate + ADP + phosphate + 2 H(+). It carries out the reaction L-glutamine + H2O = L-glutamate + NH4(+). It catalyses the reaction UTP + NH4(+) + ATP = CTP + ADP + phosphate + 2 H(+). It functions in the pathway pyrimidine metabolism; CTP biosynthesis via de novo pathway; CTP from UDP: step 2/2. Allosterically activated by GTP, when glutamine is the substrate; GTP has no effect on the reaction when ammonia is the substrate. The allosteric effector GTP functions by stabilizing the protein conformation that binds the tetrahedral intermediate(s) formed during glutamine hydrolysis. Inhibited by the product CTP, via allosteric rather than competitive inhibition. Catalyzes the ATP-dependent amination of UTP to CTP with either L-glutamine or ammonia as the source of nitrogen. Regulates intracellular CTP levels through interactions with the four ribonucleotide triphosphates. The chain is CTP synthase from Coxiella burnetii (strain Dugway 5J108-111).